The primary structure comprises 114 residues: Putative toxin HigB3 (114 aa).

This sequence belongs to the mycobacterial HigB family.

Functionally, putative toxic component of a type II toxin-antitoxin (TA) system. Its cognate antitoxin would be HigA3. Not toxic upon expression in M.smegmatis. This chain is Putative toxin HigB3, found in Mycobacterium tuberculosis (strain ATCC 25618 / H37Rv).